Reading from the N-terminus, the 212-residue chain is Putative tyrosine-protein phosphatase OCA1 (212 aa).

The disordered stretch occupies residues 1–27 (MSNKDTSILKGNVDHEEADSNPKLRKI). Over residues 12–22 (NVDHEEADSNP) the composition is skewed to basic and acidic residues. One can recognise a Tyrosine-protein phosphatase domain in the interval 40–208 (NFCPVERQLY…SVEIDPSKVP (169 aa)). The Phosphocysteine intermediate role is filled by cysteine 146.

The protein belongs to the protein-tyrosine phosphatase family.

It is found in the cytoplasm. The catalysed reaction is O-phospho-L-tyrosyl-[protein] + H2O = L-tyrosyl-[protein] + phosphate. In terms of biological role, putative tyrosine-protein phosphatase required for protection against superoxide stress. The chain is Putative tyrosine-protein phosphatase OCA1 (OCA1) from Scheffersomyces stipitis (strain ATCC 58785 / CBS 6054 / NBRC 10063 / NRRL Y-11545) (Yeast).